Consider the following 297-residue polypeptide: MMAKKPPKPAPRRIFQERLKITALPLYFEGFLLVKRSDHQEYKHYWTELRGTTLFFYTDKKSTIYVGKLDIIDLVCLTGQHSTEKNCAKFTLVLPKEEVHVKTENTESGEEWRGFILTVTELTVPQHVSLLPGQVIRLHEVLEREKKRRIETDQLPLMPPEKEKEPVQDYADVLNPLPECFYAVSRKEATAMLEKNPSWGNMILRPGSDSKNYSITIRQEIEMPRIKHFKVTRTGNNYTIELEKPVTLPNLFSVIDYFVKETRGNLRPFIHSADDNFGQDPNIEDRSEKFKKNPHNA.

Positions 25 to 121 (PLYFEGFLLV…WRGFILTVTE (97 aa)) constitute a PH domain. Tyr-170 carries the post-translational modification Phosphotyrosine. The 95-residue stretch at 179 to 273 (ECFYAVSRKE…GNLRPFIHSA (95 aa)) folds into the SH2 domain. The interval 271 to 297 (HSADDNFGQDPNIEDRSEKFKKNPHNA) is disordered.

As to quaternary structure, interacts with URI1; the interaction is phosphorylation-dependent occurs in a growth-dependent manner. Interacts with KIT and CSF1R. Post-translationally, phosphorylated on tyrosine by TEC. Phosphorylated on tyrosine by KIT. In terms of tissue distribution, expression restricted to the bone marrow.

It is found in the nucleus. The protein localises to the cytoplasm. Its subcellular location is the mitochondrion. May function as an adapter molecule downstream of KIT in the proliferation or differentiation of hematopoietic stem cells. This Mus musculus (Mouse) protein is Signal-transducing adaptor protein 1 (Stap1).